The following is a 265-amino-acid chain: Capsule polysaccharide export inner-membrane protein BexB (265 aa).

The next 6 membrane-spanning stretches (helical) occupy residues 37–57, 64–84, 121–141, 148–168, 178–198, and 235–255; these read IGFLWLFVEPLLMTFFIVMMW, KFSTLNMIAFVMTGYPMAMMW, VAGASIAQILFMAVLVLIGWI, FYMLMAWFLMAMFAFALGLII, FGKIWGTLSFVLLPISGAFFF, and ESIGFLVVSDLALLLMGLVMV. In terms of domain architecture, ABC transmembrane type-2 spans 37-258; sequence IGFLWLFVEP…LMGLVMVKNF (222 aa).

Belongs to the ABC-2 integral membrane protein family.

It is found in the cell inner membrane. Its function is as follows. May form an ATP-driven capsule polysaccharide export apparatus, in association with the BexA, BexC and BexD proteins. This Haemophilus influenzae protein is Capsule polysaccharide export inner-membrane protein BexB (bexB).